The chain runs to 666 residues: Frizzled-3 (666 aa).

Positions 1-22 (MAMTWIVFSLWPLTVFMGHIGG) are cleaved as a signal peptide. One can recognise an FZ domain in the interval 23-136 (HSLFSCEPIT…CSRFPDCDEP (114 aa)). Over 23 to 205 (HSLFSCEPIT…REELSFARYF (183 aa)) the chain is Extracellular. 5 disulfide bridges follow: Cys28-Cys89, Cys36-Cys82, Cys73-Cys110, Cys99-Cys133, and Cys103-Cys127. An N-linked (GlcNAc...) asparagine glycan is attached at Asn42. Residues 206 to 226 (IGLISIICLSATLFTFLTFLI) form a helical membrane-spanning segment. At 227 to 237 (DVTRFRYPERP) the chain is on the cytoplasmic side. The helical transmembrane segment at 238–258 (IIFYAVCYMMVSLIFFIGFLL) threads the bilayer. At 259–288 (EDRVACNASIPAQYKASTVTQGSHNKACTM) the chain is on the extracellular side. An N-linked (GlcNAc...) asparagine glycan is attached at Asn265. A helical membrane pass occupies residues 289 to 309 (LFMILYFFTMAGSVWWVILTI). At 310–328 (TWFLAAVPKWGSEAIEKKA) the chain is on the cytoplasmic side. A helical membrane pass occupies residues 329–349 (LLFHASAWGIPGTLTIILLAM). The Extracellular portion of the chain corresponds to 350-374 (NKIEGDNISGVCFVGLYDVDALRYF). Residue Asn356 is glycosylated (N-linked (GlcNAc...) asparagine). A helical membrane pass occupies residues 375–395 (VLAPLCLYVVVGVSLLLAGII). The Cytoplasmic portion of the chain corresponds to 396–420 (SLNRVRIEIPLEKENQDKLVKFMIR). A helical membrane pass occupies residues 421–441 (IGVFSILYLVPLLVVIGCYFY). At 442 to 477 (EQAYRGIWETTWIQERCREYHIPCPYQVTQMSRPDL) the chain is on the extracellular side. The helical transmembrane segment at 478–498 (ILFLMKYLMALIVGIPSVFWV) threads the bilayer. Over 499–666 (GSKKTCFEWA…RVIEEDGTSA (168 aa)) the chain is Cytoplasmic. The Lys-Thr-X-X-X-Trp motif, mediates interaction with the PDZ domain of Dvl family members signature appears at 502 to 507 (KTCFEW). Residues 538–666 (RDPNTPIIRK…RVIEEDGTSA (129 aa)) form a disordered region. Over residues 550 to 565 (GTSTQGTSTHASSTQL) the composition is skewed to polar residues. The span at 617-638 (LTDHSRHSSSHRLNEQSRHSSI) shows a compositional bias: basic and acidic residues. A compositionally biased stretch (polar residues) spans 639 to 656 (RDLSNNPMTHITHGTSMN).

The protein belongs to the G-protein coupled receptor Fz/Smo family. Interacts with VANGL2. Ubiquitinated by ZNRF3, leading to its degradation by the proteasome. As to expression, widely expressed. Relatively high expression in the CNS, including regions of the limbic system, in kidney, pancreas, skeletal muscle, uterus and testis.

It is found in the membrane. The protein resides in the cell membrane. Its subcellular location is the cell surface. It localises to the apical cell membrane. Its function is as follows. Receptor for Wnt proteins. Most of frizzled receptors are coupled to the beta-catenin canonical signaling pathway, which leads to the activation of disheveled proteins, inhibition of GSK-3 kinase, nuclear accumulation of beta-catenin and activation of Wnt target genes. A second signaling pathway involving PKC and calcium fluxes has been seen for some family members, but it is not yet clear if it represents a distinct pathway or if it can be integrated in the canonical pathway, as PKC seems to be required for Wnt-mediated inactivation of GSK-3 kinase. Both pathways seem to involve interactions with G-proteins. Activation by Wnt5A stimulates PKC activity via a G-protein-dependent mechanism. Involved in transduction and intercellular transmission of polarity information during tissue morphogenesis and/or in differentiated tissues. Plays a role in controlling early axon growth and guidance processes necessary for the formation of a subset of central and peripheral major fiber tracts. Required for the development of major fiber tracts in the central nervous system, including: the anterior commissure, the corpus callosum, the thalamocortical, corticothalamic and nigrostriatal tracts, the corticospinal tract, the fasciculus retroflexus, the mammillothalamic tract, the medial lemniscus, and ascending fiber tracts from the spinal cord to the brain. In the peripheral nervous system, controls axon growth in distinct populations of cranial and spinal motor neurons, including the facial branchimotor nerve, the hypoglossal nerve, the phrenic nerve, and motor nerves innervating dorsal limbs. Involved in the migration of cranial neural crest cells. May also be implicated in the transmission of sensory information from the trunk and limbs to the brain. Controls commissural sensory axons guidance after midline crossing along the anterior-posterior axis in the developing spinal cord in a Wnt-dependent signaling pathway. Together with FZD6, is involved in the neural tube closure and plays a role in the regulation of the establishment of planar cell polarity (PCP), particularly in the orientation of asymmetric bundles of stereocilia on the apical faces of a subset of auditory and vestibular sensory cells located in the inner ear. Promotes neurogenesis by maintaining sympathetic neuroblasts within the cell cycle in a beta-catenin-dependent manner. In Homo sapiens (Human), this protein is Frizzled-3 (FZD3).